Here is a 256-residue protein sequence, read N- to C-terminus: Ubiquinone/menaquinone biosynthesis C-methyltransferase UbiE (256 aa).

Residues T79, D100, and 128 to 129 each bind S-adenosyl-L-methionine; that span reads DA.

This sequence belongs to the class I-like SAM-binding methyltransferase superfamily. MenG/UbiE family.

The enzyme catalyses a 2-demethylmenaquinol + S-adenosyl-L-methionine = a menaquinol + S-adenosyl-L-homocysteine + H(+). It catalyses the reaction a 2-methoxy-6-(all-trans-polyprenyl)benzene-1,4-diol + S-adenosyl-L-methionine = a 5-methoxy-2-methyl-3-(all-trans-polyprenyl)benzene-1,4-diol + S-adenosyl-L-homocysteine + H(+). It functions in the pathway quinol/quinone metabolism; menaquinone biosynthesis; menaquinol from 1,4-dihydroxy-2-naphthoate: step 2/2. The protein operates within cofactor biosynthesis; ubiquinone biosynthesis. In terms of biological role, methyltransferase required for the conversion of demethylmenaquinol (DMKH2) to menaquinol (MKH2) and the conversion of 2-polyprenyl-6-methoxy-1,4-benzoquinol (DDMQH2) to 2-polyprenyl-3-methyl-6-methoxy-1,4-benzoquinol (DMQH2). The polypeptide is Ubiquinone/menaquinone biosynthesis C-methyltransferase UbiE (Pseudomonas fluorescens (strain SBW25)).